Reading from the N-terminus, the 173-residue chain is NADH-quinone oxidoreductase subunit B 2 (173 aa).

4 residues coordinate [4Fe-4S] cluster: Cys42, Cys43, Cys107, and Cys137.

Belongs to the complex I 20 kDa subunit family. As to quaternary structure, NDH-1 is composed of 14 different subunits. Subunits NuoB, C, D, E, F, and G constitute the peripheral sector of the complex. The cofactor is [4Fe-4S] cluster.

Its subcellular location is the cell inner membrane. The catalysed reaction is a quinone + NADH + 5 H(+)(in) = a quinol + NAD(+) + 4 H(+)(out). In terms of biological role, NDH-1 shuttles electrons from NADH, via FMN and iron-sulfur (Fe-S) centers, to quinones in the respiratory chain. Couples the redox reaction to proton translocation (for every two electrons transferred, four hydrogen ions are translocated across the cytoplasmic membrane), and thus conserves the redox energy in a proton gradient. This is NADH-quinone oxidoreductase subunit B 2 from Anaeromyxobacter dehalogenans (strain 2CP-C).